The following is an 88-amino-acid chain: Cell division topological specificity factor (88 aa).

This sequence belongs to the MinE family.

Functionally, prevents the cell division inhibition by proteins MinC and MinD at internal division sites while permitting inhibition at polar sites. This ensures cell division at the proper site by restricting the formation of a division septum at the midpoint of the long axis of the cell. In Cronobacter sakazakii (strain ATCC BAA-894) (Enterobacter sakazakii), this protein is Cell division topological specificity factor.